Here is a 284-residue protein sequence, read N- to C-terminus: 2-dehydro-3-deoxyphosphooctonate aldolase (284 aa).

The protein belongs to the KdsA family.

The protein localises to the cytoplasm. It carries out the reaction D-arabinose 5-phosphate + phosphoenolpyruvate + H2O = 3-deoxy-alpha-D-manno-2-octulosonate-8-phosphate + phosphate. It functions in the pathway carbohydrate biosynthesis; 3-deoxy-D-manno-octulosonate biosynthesis; 3-deoxy-D-manno-octulosonate from D-ribulose 5-phosphate: step 2/3. The protein operates within bacterial outer membrane biogenesis; lipopolysaccharide biosynthesis. The sequence is that of 2-dehydro-3-deoxyphosphooctonate aldolase from Escherichia coli O6:K15:H31 (strain 536 / UPEC).